The primary structure comprises 716 residues: Putative cuticle collagen 99 (716 aa).

2 disordered regions span residues 85–122 (LPSSDSNTDDDDVAKSRRVRNSCMCPAGPPGERGPVGP) and 183–472 (PPGP…SLVA). Triple-helical region stretches follow at residues 179–238 (GMPG…KGDR), 265–298 (LPGPPGPPGPPGPAGRDGRHGLKGDRGLPGFDGE), and 302–330 (GPKGETGSPGRDGIPGARGPPGERGEKGD). Positions 266–277 (PGPPGPPGPPGP) are enriched in pro residues. Positions 280–290 (RDGRHGLKGDR) are enriched in basic and acidic residues. Pro residues predominate over residues 349–358 (PGPPGPPGPP). Triple-helical region regions lie at residues 385-411 (GPPGEKGERGERGEPGDRGLPGAAGAA) and 422-467 (GPPG…GRHG). A compositionally biased stretch (basic and acidic residues) spans 389-401 (EKGERGERGEPGD). The segment covering 402 to 422 (RGLPGAAGAANLLNGGKALVG) has biased composition (low complexity). Positions 429–444 (RDGRPGDKGEKGEQGL) are enriched in basic and acidic residues. The N-linked (GlcNAc...) asparagine glycan is linked to N474. The interval 503–716 (KNVIPGPPGP…GAETRPPVTD (214 aa)) is disordered. Triple-helical region regions lie at residues 507 to 557 (PGPP…QPGA), 566 to 603 (GPRGPPGLPGPPGEKGDLGPPGLPGQPGSLGLPGPPGP), and 605 to 664 (GLRG…PGLD). The span at 568-577 (RGPPGLPGPP) shows a compositional bias: pro residues.

It belongs to the cuticular collagen family. Collagen polypeptide chains are complexed within the cuticle by disulfide bonds and other types of covalent cross-links.

Nematode cuticles are composed largely of collagen-like proteins. The cuticle functions both as an exoskeleton and as a barrier to protect the worm from its environment. In Caenorhabditis elegans, this protein is Putative cuticle collagen 99 (col-99).